Here is a 331-residue protein sequence, read N- to C-terminus: Ketol-acid reductoisomerase (NADP(+)) (331 aa).

The region spanning 2–182 is the KARI N-terminal Rossmann domain; the sequence is ARMYYDADAN…GGTRGGILET (181 aa). Residues 25 to 28, Ser-51, Ser-53, and 83 to 86 contribute to the NADP(+) site; these read YGSQ and DDVQ. His-108 is a catalytic residue. An NADP(+)-binding site is contributed by Gly-134. Residues 183–328 enclose the KARI C-terminal knotted domain; the sequence is TFREETETDL…KDLRAMFSWL (146 aa). Residues Asp-191, Glu-195, Glu-227, and Glu-231 each contribute to the Mg(2+) site. Ser-252 lines the substrate pocket.

The protein belongs to the ketol-acid reductoisomerase family. The cofactor is Mg(2+).

It carries out the reaction (2R)-2,3-dihydroxy-3-methylbutanoate + NADP(+) = (2S)-2-acetolactate + NADPH + H(+). The catalysed reaction is (2R,3R)-2,3-dihydroxy-3-methylpentanoate + NADP(+) = (S)-2-ethyl-2-hydroxy-3-oxobutanoate + NADPH + H(+). The protein operates within amino-acid biosynthesis; L-isoleucine biosynthesis; L-isoleucine from 2-oxobutanoate: step 2/4. It functions in the pathway amino-acid biosynthesis; L-valine biosynthesis; L-valine from pyruvate: step 2/4. Involved in the biosynthesis of branched-chain amino acids (BCAA). Catalyzes an alkyl-migration followed by a ketol-acid reduction of (S)-2-acetolactate (S2AL) to yield (R)-2,3-dihydroxy-isovalerate. In the isomerase reaction, S2AL is rearranged via a Mg-dependent methyl migration to produce 3-hydroxy-3-methyl-2-ketobutyrate (HMKB). In the reductase reaction, this 2-ketoacid undergoes a metal-dependent reduction by NADPH to yield (R)-2,3-dihydroxy-isovalerate. The sequence is that of Ketol-acid reductoisomerase (NADP(+)) from Picosynechococcus sp. (strain ATCC 27264 / PCC 7002 / PR-6) (Agmenellum quadruplicatum).